Reading from the N-terminus, the 289-residue chain is Acetyl-coenzyme A carboxylase carboxyl transferase subunit beta (289 aa).

Residues 28–289 enclose the CoA carboxyltransferase N-terminal domain; the sequence is VMTKCPKCKK…QGGEMAVWQS (262 aa). Positions 32, 35, 51, and 54 each coordinate Zn(2+). Residues 32 to 54 form a C4-type zinc finger; it reads CPKCKKIMYTKEVLKNLKVCVNC.

Belongs to the AccD/PCCB family. In terms of assembly, acetyl-CoA carboxylase is a heterohexamer composed of biotin carboxyl carrier protein (AccB), biotin carboxylase (AccC) and two subunits each of ACCase subunit alpha (AccA) and ACCase subunit beta (AccD). The cofactor is Zn(2+).

Its subcellular location is the cytoplasm. The enzyme catalyses N(6)-carboxybiotinyl-L-lysyl-[protein] + acetyl-CoA = N(6)-biotinyl-L-lysyl-[protein] + malonyl-CoA. Its pathway is lipid metabolism; malonyl-CoA biosynthesis; malonyl-CoA from acetyl-CoA: step 1/1. Functionally, component of the acetyl coenzyme A carboxylase (ACC) complex. Biotin carboxylase (BC) catalyzes the carboxylation of biotin on its carrier protein (BCCP) and then the CO(2) group is transferred by the transcarboxylase to acetyl-CoA to form malonyl-CoA. This chain is Acetyl-coenzyme A carboxylase carboxyl transferase subunit beta, found in Bacillus cereus (strain ZK / E33L).